An 83-amino-acid polypeptide reads, in one-letter code: Pigment-dispersing hormone peptides (83 aa).

A signal peptide spans 1–24 (MRFIILGVLFIAVASMILSNGVMA). At Ala80 the chain carries Alanine amide.

The protein belongs to the arthropod PDH family. Strongly expressed in eyestalk tissue and cerebral ganglia (at protein level).

Its subcellular location is the secreted. Functionally, the pigment-dispersing hormone causes the migration of the distal retinal pigment into the proximal end of the pigment chromatophore cells and thus decreases the amount of light entering the retinulas. May also function as a neurotransmitter and/or neuromodulator. This is Pigment-dispersing hormone peptides from Eurydice pulchra (Speckled sea louse).